The chain runs to 588 residues: MTATPAQRRPALPATRPYPARHGPKGSYLRKMVTTTDPKDLGVLYLVSATGFFLIGGLLALLMRGELARPGLQFLSAEQYNQLFTMHGTIMLLFYATPVVFGFANAVLPLQIGAPDVAFPRLNAFSYWLYLFGATMATAGFLTPGGAADFGWTAYTPLSLSEHSPGVGADLWILGLAVSGLGTILGAVNMITTVVCLRAPGMTMFRMPIFTWNILITSILVLLAFPILTAALMALAYDRHLGGHIYDPANGGAILYQHLFWFFGHPEVYIIALPFFGIISEVIPVFSRKPIFGYTALVYATLAIAALSMAVWAHHMYATGAVLLPFFSMMTFLIAVPTGVKFFNWIGTMWKGQITFETPMLFAIGFIVTFLLGGLSGVILASPPLDWHVTDSYFVVAHFHYVLFGTIVFATFAGIYFWFPKLTGRFMDERLGRLHFWTTFLGFHLTFLVQHWLGNEGMPRRYADYLPSDGFTGLNTVSTIGSFLLGISMVTFVWNGFKSFRYGEVVTVDDPWGAGNSLEWATTCPPPRHNFYELPRIRSERPAFELHYPHMAERMRAEAHAGRRAGHGAGAELSVPSTVATKDDDHTS.

Residues Met-1–Gly-26 form a disordered region. The chain crosses the membrane as a helical span at residues Val-43–Met-63. His-87 contributes to the Fe(II)-heme a binding site. 6 helical membrane-spanning segments follow: residues Ile-90–Leu-110, Trp-128–Ala-148, Leu-171–Ile-191, Ile-214–Ala-234, Leu-259–Ile-279, and Ile-291–Val-311. Residues His-265 and Tyr-269 each contribute to the Cu cation site. Residues His-265 to Tyr-269 constitute a cross-link (1'-histidyl-3'-tyrosine (His-Tyr)). Residues His-314 and His-315 each contribute to the Cu cation site. Transmembrane regions (helical) follow at residues Gly-320–Val-340 and Met-360–Leu-380. Residue His-398 participates in heme a3 binding. 3 helical membrane-spanning segments follow: residues Phe-399 to Phe-419, Leu-434 to Gly-454, and Val-477 to Phe-497. His-400 is a binding site for Fe(II)-heme a. The segment at Ala-557–Ser-588 is disordered.

Belongs to the heme-copper respiratory oxidase family. As to quaternary structure, associates with subunits II, III and IV to form cytochrome c oxidase. Cu(2+) serves as cofactor. The cofactor is heme.

The protein localises to the cell membrane. It carries out the reaction 4 Fe(II)-[cytochrome c] + O2 + 8 H(+)(in) = 4 Fe(III)-[cytochrome c] + 2 H2O + 4 H(+)(out). It participates in energy metabolism; oxidative phosphorylation. Its function is as follows. Cytochrome c oxidase is the component of the respiratory chain that catalyzes the reduction of oxygen to water. Subunits 1-3 form the functional core of the enzyme complex. CO I is the catalytic subunit of the enzyme. Electrons originating in cytochrome c are transferred via the copper A center of subunit 2 and heme A of subunit 1 to the bimetallic center formed by heme A3 and copper B. The protein is Probable cytochrome c oxidase subunit 1-beta (ctaD2) of Nocardia farcinica (strain IFM 10152).